Reading from the N-terminus, the 913-residue chain is Tyrosine-protein phosphatase non-receptor type 3 (913 aa).

An FERM domain is found at 29-312 (VICSIRFLDG…EHHSFFQAKK (284 aa)). Ser357, Ser359, and Ser367 each carry phosphoserine. Disordered stretches follow at residues 364–400 (ETKS…DNLA) and 417–473 (KGPL…PDGV). The residue at position 376 (Thr376) is a Phosphothreonine. Ser381 carries the post-translational modification Phosphoserine. Residues 382 to 393 (PRLRHEIRKPRH) show a composition bias toward basic residues. Ser425 carries the post-translational modification Phosphoserine. The span at 441–453 (SENNPAQSCLTQK) shows a compositional bias: polar residues. A compositionally biased stretch (low complexity) spans 454–470 (SSSSVSPSSNAPGSCSP). The region spanning 510-582 (LIRITPDEEG…DQVVMFIKAS (73 aa)) is the PDZ domain. In terms of domain architecture, Tyrosine-protein phosphatase spans 646–901 (VLIQFEQLYR…KFVCEAILRV (256 aa)). Residues Asp811, 842–848 (CSAGIGR), and Gln886 contribute to the substrate site. Residue Cys842 is the Phosphocysteine intermediate of the active site.

Belongs to the protein-tyrosine phosphatase family. Non-receptor class subfamily.

It localises to the cell membrane. The protein localises to the cytoplasm. The protein resides in the cytoskeleton. It carries out the reaction O-phospho-L-tyrosyl-[protein] + H2O = L-tyrosyl-[protein] + phosphate. Its function is as follows. May act at junctions between the membrane and the cytoskeleton. The protein is Tyrosine-protein phosphatase non-receptor type 3 (Ptpn3) of Mus musculus (Mouse).